The primary structure comprises 129 residues: Virion-associated protein (129 aa).

Coiled-coil stretches lie at residues 1–31 (MANLNQIQKEVSEILSDQKSMKADIKAILEL) and 38–59 (IKESLETVAAKIVNDLTKLIND). The segment at 122–129 (PAGWPNQY) is capsid binding.

Belongs to the caulimovirus ORF III family. In terms of assembly, homotetramer, through coiled-coil domain. Homotrimer when interacts with icosehadral capsid. Interacts with capsid protein, and with Movement protein.

It localises to the virion. The protein resides in the host cell junction. Its subcellular location is the host plasmodesma. Its function is as follows. Plays a role in virus cell-to-cell and plant-to-plant transmission. Interacts with virion icosahedral capsid and movement protein, thereby facilitating virion cell-to-cell transmission through plasmodesmata opened by viral movement protein. Also interacts with aphid transmission factor, attaching the virion to aphid stylet when the animal feeds on an virus infected plant. Aphid saliva may later detach the virion, inducing release of infectious particles when the animal feeds on a new plant. This chain is Virion-associated protein, found in Cauliflower mosaic virus (strain D/H) (CaMV).